A 141-amino-acid chain; its full sequence is Large ribosomal subunit protein uL11 (141 aa).

This sequence belongs to the universal ribosomal protein uL11 family. In terms of assembly, part of the ribosomal stalk of the 50S ribosomal subunit. Interacts with L10 and the large rRNA to form the base of the stalk. L10 forms an elongated spine to which L12 dimers bind in a sequential fashion forming a multimeric L10(L12)X complex. In terms of processing, one or more lysine residues are methylated.

In terms of biological role, forms part of the ribosomal stalk which helps the ribosome interact with GTP-bound translation factors. In Geobacter sulfurreducens (strain ATCC 51573 / DSM 12127 / PCA), this protein is Large ribosomal subunit protein uL11.